We begin with the raw amino-acid sequence, 331 residues long: Gem-associated protein 2 (331 aa).

3 disordered regions span residues 1–23 (MDEF…NEPL), 101–130 (SNRP…LIPQ), and 151–222 (NNNN…TKKP). Acidic residues predominate over residues 11 to 21 (VGEEIEPDDNE). A compositionally biased stretch (low complexity) spans 106-126 (NNNNNNNNNNNNNNNNNNNNN). The segment covering 165 to 215 (DNQEDDDDDENNEDYEYNENKEEEEEEEEEEEEEEEVEEEEEEEEEEEEVV) has biased composition (acidic residues). A coiled-coil region spans residues 173 to 224 (DENNEDYEYNENKEEEEEEEEEEEEEEEVEEEEEEEEEEEEVVDYSTKKPTL).

Belongs to the gemin-2 family.

The protein localises to the nucleus. It is found in the gem. It localises to the cytoplasm. Its function is as follows. The SMN complex catalyzes the assembly of small nuclear ribonucleoproteins (snRNPs), the building blocks of the spliceosome, and thereby plays an important role in the splicing of cellular pre-mRNAs. Most spliceosomal snRNPs contain a common set of Sm proteins SNRPB, SNRPD1, SNRPD2, SNRPD3, SNRPE, SNRPF and SNRPG that assemble in a heptameric protein ring on the Sm site of the small nuclear RNA to form the core snRNP (Sm core). In the cytosol, the Sm proteins SNRPD1, SNRPD2, SNRPE, SNRPF and SNRPG (5Sm) are trapped in an inactive 6S pICln-Sm complex by the chaperone CLNS1A that controls the assembly of the core snRNP. To assemble core snRNPs, the SMN complex accepts the trapped 5Sm proteins from CLNS1A. Binding of snRNA inside 5Sm ultimately triggers eviction of the SMN complex, thereby allowing binding of SNRPD3 and SNRPB to complete assembly of the core snRNP. Within the SMN complex, GEMIN2 constrains the conformation of 5Sm, thereby promoting 5Sm binding to snRNA containing the snRNP code (a nonameric Sm site and a 3'-adjacent stem-loop), thus preventing progression of assembly until a cognate substrate is bound. Functionally, may play an essential role in spliceosomal snRNP assembly in the cytoplasm and may be required for pre-mRNA splicing in the nucleus. In Dictyostelium discoideum (Social amoeba), this protein is Gem-associated protein 2 (gemin2).